The chain runs to 5641 residues: Cyclochlorotine synthetase (5641 aa).

The interval 95-124 (PENLNGHLIGSTNGHKKQWENDSADDKRGQ) is disordered. Over residues 111–124 (KQWENDSADDKRGQ) the composition is skewed to basic and acidic residues. The interval 217–622 (FTENVQRYPT…GRRDTQVKIR (406 aa)) is adenylation (A) domain 1. The Carrier 1 domain maps to 816–892 (TEEEYKIQTL…DLVSNCKMSA (77 aa)). Residues 821–889 (KIQTLKEIWS…QLSDLVSNCK (69 aa)) are thiolation (T) domain 1. Ser853 carries the O-(pantetheine 4'-phosphoryl)serine modification. A condensation (C) domain 1 region spans residues 926–1333 (EDVYPCTPLQ…AHVAEQIGQP (408 aa)). The segment at 1390–1768 (DGNLTFEELN…ISRATTQIKI (379 aa)) is adenylation (A) domain 2. Positions 1902-1978 (IELSEKQENM…QLVMIATELT (77 aa)) constitute a Carrier 2 domain. The segment at 1907 to 1975 (KQENMARLWA…RFDQLVMIAT (69 aa)) is thiolation (T) domain 2. The residue at position 1939 (Ser1939) is an O-(pantetheine 4'-phosphoryl)serine. Residues 2022 to 2438 (DIYACTPFQE…DLASEQDLAK (417 aa)) form a condensation (C) domain 2 region. The adenylation (A) domain 3 stretch occupies residues 2459–2859 (AEKARQHPNK…GRADTQVKLR (401 aa)). A Carrier 3 domain is found at 2976–3052 (GPLTEMETTL…GMAIKIQPIH (77 aa)). The tract at residues 2977-3049 (PLTEMETTLA…NLAGMAIKIQ (73 aa)) is thiolation (T) domain 3. Ser3013 carries the O-(pantetheine 4'-phosphoryl)serine modification. Positions 3089 to 3482 (DIYPCTPLQV…LETVLSAFST (394 aa)) are condensation (C) domain 3. Residues 3523–3873 (VQRAPDKVAI…IARKDLQVKL (351 aa)) form an adenylation (A) domain 4 region. The Carrier 4 domain occupies 4005–4081 (IPSTPTEMKM…ELATKIAPRI (77 aa)). The thiolation (T) domain 4 stretch occupies residues 4010–4078 (TEMKMQQLWA…RLSELATKIA (69 aa)). Position 4042 is an O-(pantetheine 4'-phosphoryl)serine (Ser4042). The interval 4123-4549 (KDVYPCTPLQ…QSLDSLSQQD (427 aa)) is condensation (C) domain 4. An adenylation (A) domain 5 region spans residues 4574–4982 (QEIAGRHPDA…GRIGTDIKLR (409 aa)). One can recognise a Carrier 5 domain in the interval 5118-5194 (PPSTQEEKVI…SLAEKISWES (77 aa)). Positions 5123–5191 (EEKVIAALWA…KLASLAEKIS (69 aa)) are thiolation (T) domain 5. The residue at position 5155 (Ser5155) is an O-(pantetheine 4'-phosphoryl)serine. Residues 5260 to 5556 (AYLDIGPDVQ…DKCTTCVSGS (297 aa)) are condensation (C) domain 5.

This sequence belongs to the NRP synthetase family.

It functions in the pathway mycotoxin biosynthesis. In terms of biological role, nonribosomal peptide synthetase; part of the gene cluster that mediates the biosynthesis of the mycotoxin cyclochlorotine, a hepatotoxic and carcinogenic cyclic chlorinated pentapeptide. Within the pathway, The NRPS cctN initially catalyzes the condensation of L-serine (Ser), Pro, L-2-aminobutyrate (2Abu), Ser, and beta-Phe in this order. During the chain elongation, side-chain hydroxy group of Ser4 would be used as a nucleophile, giving isocyclotine as a product of terminal condensation-like (CT) domain-catalyzed cyclization. After the dichlorination of Pro2 catalyzed by cctP2 to produce isocyclochlorotine, the cctO-mediated transacylation of isocyclochlorotine can furnish cyclochlorotine. The subsequent hydroxylation of cyclochlorotine by cctR yields hydroxycyclochlorotine as the final product. CctP1 probably acts as a phenylalanine aminomutase and provides the uncommon building block beta-Phe. Furthermore, 2Abu can be synthesized from threonine by one of the threonine dehydratases and transaminases localized outside of the cluster. The functions of the remaining proteins encoded by the cluster, cctM and cctT, have not been identified yet. The chain is Cyclochlorotine synthetase from Talaromyces islandicus (Penicillium islandicum).